Reading from the N-terminus, the 447-residue chain is Serine/threonine-protein phosphatase 2A 55 kDa regulatory subunit B delta isoform (447 aa).

WD repeat units lie at residues 26 to 65 (AEAD…KSRP), 91 to 132 (EIEE…KRVE), 175 to 213 (AHTY…RSFN), 224 to 264 (ELTE…LCDR), 283 to 321 (EIIS…RPVE), 338 to 379 (ENDC…DITL), and 414 to 447 (DFNK…DKVN).

This sequence belongs to the phosphatase 2A regulatory subunit B family. PP2A consists of a common heterodimeric core enzyme, composed of a 36 kDa catalytic subunit (subunit C) and a 65 kDa constant regulatory subunit (PR65 or subunit A), that associates with a variety of regulatory subunits. Proteins that associate with the core dimer include three families of regulatory subunits B (the R2/B/PR55/B55, R3/B''/PR72/PR130/PR59 and R5/B'/B56 families), the 48 kDa variable regulatory subunit, viral proteins, and cell signaling molecules. Interacts with ensa (when phosphorylated at 'Ser-67') and arpp19 (when phosphorylated at 'Ser-67'), leading to inhibit PP2A activity.

It is found in the cytoplasm. In terms of biological role, substrate-recognition subunit of protein phosphatase 2A (PP2A) that plays a key role in cell cycle by controlling mitosis entry and exit. The activity of PP2A complexes containing ppp2r2d (PR55-delta) fluctuate during the cell cycle: the activity is high in interphase and low in mitosis. During mitosis, activity of PP2A is inhibited via interaction with phosphorylated ensa and arpp19 inhibitors. PP2A complexes containing ppp2r2d (PR55-delta) also regulate the activity of TGF-beta/Activin/Nodal signaling by restricting receptor activity. Within the PP2A complexes, the B regulatory subunits modulate substrate selectivity and catalytic activity, and may also direct the localization of the catalytic enzyme to a particular subcellular compartment. The polypeptide is Serine/threonine-protein phosphatase 2A 55 kDa regulatory subunit B delta isoform (ppp2r2d) (Xenopus tropicalis (Western clawed frog)).